The primary structure comprises 334 residues: MQRSLNEFLTPRTIEVNQINATHAKVTLEPLERGFGHTLGSALRRILLSSMPGCAVVEVEIDGVLHEYSTVEGVQEDVIEILLNLKNLAIKMHNRDEATLSLNKKGAGPVLASDIQLDHDVEIANPDMVICNLNSNGDVKMKLKVARGRGYEPADQRNSADDETRAIGRLQLDSSFSPVLRVAYNVESARVEQRTDLDKLVIDLETNGTIDPEEAIRRAATILQQQLAVFVDFDQQNEPEKVEEQEEIDPILLRPVDDLELTVRSANCLKAENIYYIGDLIQRTEVELLKTPNLGKKSLTEIKDVLASRGLSLGMRLENWPPASIRGDDRVLGG.

The alpha N-terminal domain (alpha-NTD) stretch occupies residues 1-234; sequence MQRSLNEFLT…QQLAVFVDFD (234 aa). Residues 248 to 334 form an alpha C-terminal domain (alpha-CTD) region; sequence IDPILLRPVD…IRGDDRVLGG (87 aa).

It belongs to the RNA polymerase alpha chain family. Homodimer. The RNAP catalytic core consists of 2 alpha, 1 beta, 1 beta' and 1 omega subunit. When a sigma factor is associated with the core the holoenzyme is formed, which can initiate transcription.

It carries out the reaction RNA(n) + a ribonucleoside 5'-triphosphate = RNA(n+1) + diphosphate. Functionally, DNA-dependent RNA polymerase catalyzes the transcription of DNA into RNA using the four ribonucleoside triphosphates as substrates. The protein is DNA-directed RNA polymerase subunit alpha of Hahella chejuensis (strain KCTC 2396).